The following is a 955-amino-acid chain: Eukaryotic translation initiation factor 3 subunit A (955 aa).

Residues 96–127 (LSLAEQRVTDAQAQADKIADEEEADDLEAEET) are a coiled coil. The PCI domain occupies 325-498 (YQRVASFVLL…RSVLFEEVRA (174 aa)). Coiled coils occupy residues 533-636 (AEAR…INAK) and 752-860 (KREA…KRAG). The span at 789-858 (RAEEEAKAAA…ELEAKLEAKR (70 aa)) shows a compositional bias: basic and acidic residues. The disordered stretch occupies residues 789–955 (RAEEEAKAAA…GRYIPPSQRN (167 aa)).

This sequence belongs to the eIF-3 subunit A family. Component of the eukaryotic translation initiation factor 3 (eIF-3) complex.

The protein localises to the cytoplasm. Functionally, RNA-binding component of the eukaryotic translation initiation factor 3 (eIF-3) complex, which is involved in protein synthesis of a specialized repertoire of mRNAs and, together with other initiation factors, stimulates binding of mRNA and methionyl-tRNAi to the 40S ribosome. The eIF-3 complex specifically targets and initiates translation of a subset of mRNAs involved in cell proliferation. This is Eukaryotic translation initiation factor 3 subunit A from Yarrowia lipolytica (strain CLIB 122 / E 150) (Yeast).